The sequence spans 195 residues: Probable molybdenum cofactor guanylyltransferase (195 aa).

GTP-binding positions include 8–10 (LSG), Lys-20, Asp-65, and Asp-96. Asp-96 lines the Mg(2+) pocket.

The protein belongs to the MobA family. Requires Mg(2+) as cofactor.

It is found in the cytoplasm. It catalyses the reaction Mo-molybdopterin + GTP + H(+) = Mo-molybdopterin guanine dinucleotide + diphosphate. Its function is as follows. Transfers a GMP moiety from GTP to Mo-molybdopterin (Mo-MPT) cofactor (Moco or molybdenum cofactor) to form Mo-molybdopterin guanine dinucleotide (Mo-MGD) cofactor. This Bacillus licheniformis (strain ATCC 14580 / DSM 13 / JCM 2505 / CCUG 7422 / NBRC 12200 / NCIMB 9375 / NCTC 10341 / NRRL NRS-1264 / Gibson 46) protein is Probable molybdenum cofactor guanylyltransferase.